The following is a 65-amino-acid chain: Metallothionein-3 (65 aa).

M1 carries the post-translational modification N-acetylmethionine. Residues 1–30 (MDPEACPCPTGGSCTCSDSCKCEGCTCASS) form a beta region. The a divalent metal cation site is built by C6, C8, C14, C16, C20, C22, C25, and C27. Residues 31-65 (KKSCCPAECEKCAKDCVCKGGEGAEAEEKKCGCCQ) are alpha. A Phosphoserine modification is found at S33. Residues C34, C35, C39, C42, C46, C48, C61, C63, and C64 each coordinate a divalent metal cation.

The protein belongs to the metallothionein superfamily. Type 1 family.

Its function is as follows. Binds heavy metals. Contains five zinc and one copper atoms per polypeptide chain and only a negligible amount of cadmium. The protein is Metallothionein-3 (MT3) of Ovis aries (Sheep).